The sequence spans 204 residues: MDRVVLMLSVLSLGVSSQPITDGQRLFSIAVSRVQHLHLLAQRLFSDFESSLQTEEQRQLNKIFLQDFCNSDYIISPIDKHETQRSSVLKLLSISYRLVESWEFPSRSLAGGSAPRNQISPKLSELKTGIHLLIRANEDGAELFPDSSALQLAPYGDYYQSPGTDESLRRTYELLACFKKDMHKVETYLTVAKCRLSPEANCTL.

Positions 1 to 17 are cleaved as a signal peptide; that stretch reads MDRVVLMLSVLSLGVSS. Position 18 is a pyrrolidone carboxylic acid (Gln18). Zn(2+) is bound at residue His36. A disulfide bridge links Cys69 with Cys177. Residue Glu186 participates in Zn(2+) binding. Cys194 and Cys202 are oxidised to a cystine.

Belongs to the somatotropin/prolactin family.

The protein localises to the secreted. Functionally, growth hormone plays an important role in growth control and is involved in the regulation of several anabolic processes. Implicated as an osmoregulatory substance important for seawater adaptation. The polypeptide is Somatotropin (gh) (Acanthopagrus latus (Yellowfin seabream)).